The following is a 367-amino-acid chain: Heme A synthase (367 aa).

Transmembrane regions (helical) follow at residues Gly12–Gly32, Leu99–Gly119, Leu127–Val147, Leu163–Gly183, and Ala198–Ala218. His264 contributes to the heme binding site. Helical transmembrane passes span Val266–Gly286, Gly296–Val316, and Pro317–Val337. Residue His324 coordinates heme.

Belongs to the COX15/CtaA family. Type 2 subfamily. Interacts with CtaB. Heme b serves as cofactor.

It is found in the cell membrane. The catalysed reaction is Fe(II)-heme o + 2 A + H2O = Fe(II)-heme a + 2 AH2. Its pathway is porphyrin-containing compound metabolism; heme A biosynthesis; heme A from heme O: step 1/1. In terms of biological role, catalyzes the conversion of heme O to heme A by two successive hydroxylations of the methyl group at C8. The first hydroxylation forms heme I, the second hydroxylation results in an unstable dihydroxymethyl group, which spontaneously dehydrates, resulting in the formyl group of heme A. This Methylobacterium radiotolerans (strain ATCC 27329 / DSM 1819 / JCM 2831 / NBRC 15690 / NCIMB 10815 / 0-1) protein is Heme A synthase.